Reading from the N-terminus, the 179-residue chain is tRNA (cytidine(56)-2'-O)-methyltransferase (179 aa).

S-adenosyl-L-methionine contacts are provided by residues Leu82, 112-116, and 130-137; these read GAEKV and VGNQPHSE.

It belongs to the aTrm56 family. In terms of assembly, homodimer.

The protein resides in the cytoplasm. The enzyme catalyses cytidine(56) in tRNA + S-adenosyl-L-methionine = 2'-O-methylcytidine(56) in tRNA + S-adenosyl-L-homocysteine + H(+). Functionally, specifically catalyzes the AdoMet-dependent 2'-O-ribose methylation of cytidine at position 56 in tRNAs. The polypeptide is tRNA (cytidine(56)-2'-O)-methyltransferase (Methanococcus maripaludis (strain C7 / ATCC BAA-1331)).